A 478-amino-acid chain; its full sequence is Membrane-bound lytic murein transglycosylase F (478 aa).

An N-terminal signal peptide occupies residues 1 to 22; the sequence is MTRFLFAIILGFLLTACQQVTV. The interval 23–257 is non-LT domain; it reads EETEYVPHKL…HLNEKYFGHV (235 aa). Residues 258 to 478 are LT domain; that stretch reads KRFDYIDTRA…PGTLSPDKPK (221 aa). Glutamate 302 is an active-site residue. The tract at residues 446–478 is disordered; that stretch reads SKQQNSDEEEPSDLASEDGPAPVPGTLSPDKPK. Positions 451 to 461 are enriched in acidic residues; the sequence is SDEEEPSDLAS.

This sequence in the N-terminal section; belongs to the bacterial solute-binding protein 3 family. It in the C-terminal section; belongs to the transglycosylase Slt family.

The protein localises to the cell outer membrane. The enzyme catalyses Exolytic cleavage of the (1-&gt;4)-beta-glycosidic linkage between N-acetylmuramic acid (MurNAc) and N-acetylglucosamine (GlcNAc) residues in peptidoglycan, from either the reducing or the non-reducing ends of the peptidoglycan chains, with concomitant formation of a 1,6-anhydrobond in the MurNAc residue.. Murein-degrading enzyme that degrades murein glycan strands and insoluble, high-molecular weight murein sacculi, with the concomitant formation of a 1,6-anhydromuramoyl product. Lytic transglycosylases (LTs) play an integral role in the metabolism of the peptidoglycan (PG) sacculus. Their lytic action creates space within the PG sacculus to allow for its expansion as well as for the insertion of various structures such as secretion systems and flagella. The protein is Membrane-bound lytic murein transglycosylase F of Shewanella sp. (strain MR-4).